A 428-amino-acid polypeptide reads, in one-letter code: 3-phosphoshikimate 1-carboxyvinyltransferase (428 aa).

Residues K22, S23, and R27 each coordinate 3-phosphoshikimate. K22 provides a ligand contact to phosphoenolpyruvate. 2 residues coordinate phosphoenolpyruvate: G96 and R124. S170, S171, Q172, S198, D314, N337, and K341 together coordinate 3-phosphoshikimate. A phosphoenolpyruvate-binding site is contributed by Q172. Residue D314 is the Proton acceptor of the active site. 3 residues coordinate phosphoenolpyruvate: R345, R387, and K412.

Belongs to the EPSP synthase family. In terms of assembly, monomer.

The protein resides in the cytoplasm. The catalysed reaction is 3-phosphoshikimate + phosphoenolpyruvate = 5-O-(1-carboxyvinyl)-3-phosphoshikimate + phosphate. Its pathway is metabolic intermediate biosynthesis; chorismate biosynthesis; chorismate from D-erythrose 4-phosphate and phosphoenolpyruvate: step 6/7. Catalyzes the transfer of the enolpyruvyl moiety of phosphoenolpyruvate (PEP) to the 5-hydroxyl of shikimate-3-phosphate (S3P) to produce enolpyruvyl shikimate-3-phosphate and inorganic phosphate. The chain is 3-phosphoshikimate 1-carboxyvinyltransferase from Photobacterium profundum (strain SS9).